Consider the following 403-residue polypeptide: CinA-like protein (403 aa).

The protein belongs to the CinA family.

This Petrotoga mobilis (strain DSM 10674 / SJ95) protein is CinA-like protein.